The chain runs to 141 residues: Phosphoribosyl-AMP cyclohydrolase (141 aa).

Residue aspartate 91 coordinates Mg(2+). Cysteine 92 is a binding site for Zn(2+). Mg(2+) contacts are provided by aspartate 93 and aspartate 95. Residues cysteine 110 and cysteine 117 each coordinate Zn(2+).

Belongs to the PRA-CH family. Homodimer. Mg(2+) is required as a cofactor. It depends on Zn(2+) as a cofactor.

The protein resides in the cytoplasm. The catalysed reaction is 1-(5-phospho-beta-D-ribosyl)-5'-AMP + H2O = 1-(5-phospho-beta-D-ribosyl)-5-[(5-phospho-beta-D-ribosylamino)methylideneamino]imidazole-4-carboxamide. It functions in the pathway amino-acid biosynthesis; L-histidine biosynthesis; L-histidine from 5-phospho-alpha-D-ribose 1-diphosphate: step 3/9. Functionally, catalyzes the hydrolysis of the adenine ring of phosphoribosyl-AMP. The chain is Phosphoribosyl-AMP cyclohydrolase from Brucella anthropi (strain ATCC 49188 / DSM 6882 / CCUG 24695 / JCM 21032 / LMG 3331 / NBRC 15819 / NCTC 12168 / Alc 37) (Ochrobactrum anthropi).